The sequence spans 526 residues: Nucleolar complex protein 4 homolog A (526 aa).

A run of 3 helical transmembrane segments spans residues 307–327 (AAYD…FILI), 358–378 (FFHL…LVAA), and 386–406 (LALT…CNLI).

It belongs to the CBF/MAK21 family.

The protein localises to the nucleus membrane. It is found in the nucleus. It localises to the nucleolus. The protein is Nucleolar complex protein 4 homolog A (noc4l-a) of Xenopus laevis (African clawed frog).